The sequence spans 341 residues: tRNA N6-adenosine threonylcarbamoyltransferase (341 aa).

Residues His-112 and His-116 each coordinate Fe cation. Residues 138–142 (TVSGG), Asp-171, Gly-184, Asp-188, and Asn-279 each bind substrate. Asp-307 serves as a coordination point for Fe cation.

The protein belongs to the KAE1 / TsaD family. Requires Fe(2+) as cofactor.

It localises to the cytoplasm. The enzyme catalyses L-threonylcarbamoyladenylate + adenosine(37) in tRNA = N(6)-L-threonylcarbamoyladenosine(37) in tRNA + AMP + H(+). In terms of biological role, required for the formation of a threonylcarbamoyl group on adenosine at position 37 (t(6)A37) in tRNAs that read codons beginning with adenine. Is involved in the transfer of the threonylcarbamoyl moiety of threonylcarbamoyl-AMP (TC-AMP) to the N6 group of A37, together with TsaE and TsaB. TsaD likely plays a direct catalytic role in this reaction. The polypeptide is tRNA N6-adenosine threonylcarbamoyltransferase (Riemerella anatipestifer (Moraxella anatipestifer)).